The primary structure comprises 766 residues: Transcription factor GTE4 (766 aa).

Disordered regions lie at residues 87–108 (GTNS…PGDD), 234–262 (RDTT…PMEE), and 388–412 (GDKL…GDVG). A compositionally biased stretch (polar residues) spans 238–250 (DAQQPAGLTSDSA). The Bromo domain maps to 416-522 (GAGTKVFKNC…QIFEERWAVI (107 aa)). Disordered stretches follow at residues 544–606 (TMRS…NKRD) and 687–766 (ARAE…SDQT). The span at 574–589 (PTTTPGRTPTSATPSG) shows a compositional bias: low complexity. The region spanning 597-678 (PKANEPNKRD…NYKKGLSKKK (82 aa)) is the NET domain. The span at 736 to 766 (SRSSSSSSSSSSSSSSDSDSDSSSSSGSDQT) shows a compositional bias: low complexity.

Ubiquitously expressed.

The protein resides in the nucleus. Its function is as follows. Involved in the activation and maintenance of cell division in the meristems and by this controls cell numbers in differentiated organs. Its action in cell cycle regulation may be directed through the RB-E2F pathway. The polypeptide is Transcription factor GTE4 (GTE4) (Arabidopsis thaliana (Mouse-ear cress)).